The primary structure comprises 459 residues: Bifunctional protein GlmU (459 aa).

Residues 1–230 form a pyrophosphorylase region; the sequence is MVKRYAVILA…FEETIGVNDR (230 aa). UDP-N-acetyl-alpha-D-glucosamine is bound by residues 9–12, Lys23, Gln73, and 78–79; these read LAAG and GT. Asp103 contacts Mg(2+). The UDP-N-acetyl-alpha-D-glucosamine site is built by Gly140, Glu155, Asn170, and Asn228. Asn228 lines the Mg(2+) pocket. Positions 231–251 are linker; that stretch reads VALAEAEKIMRERICRKHMMN. Residues 252-459 form an N-acetyltransferase region; the sequence is GVTIIDPAHT…VDRLSIKKNS (208 aa). Residues Arg333 and Lys351 each coordinate UDP-N-acetyl-alpha-D-glucosamine. His363 serves as the catalytic Proton acceptor. UDP-N-acetyl-alpha-D-glucosamine contacts are provided by Tyr366 and Asn377. Acetyl-CoA-binding positions include 386–387, Ala423, and Arg440; that span reads NY.

It in the N-terminal section; belongs to the N-acetylglucosamine-1-phosphate uridyltransferase family. In the C-terminal section; belongs to the transferase hexapeptide repeat family. As to quaternary structure, homotrimer. Mg(2+) serves as cofactor.

The protein resides in the cytoplasm. The catalysed reaction is alpha-D-glucosamine 1-phosphate + acetyl-CoA = N-acetyl-alpha-D-glucosamine 1-phosphate + CoA + H(+). It carries out the reaction N-acetyl-alpha-D-glucosamine 1-phosphate + UTP + H(+) = UDP-N-acetyl-alpha-D-glucosamine + diphosphate. Its pathway is nucleotide-sugar biosynthesis; UDP-N-acetyl-alpha-D-glucosamine biosynthesis; N-acetyl-alpha-D-glucosamine 1-phosphate from alpha-D-glucosamine 6-phosphate (route II): step 2/2. The protein operates within nucleotide-sugar biosynthesis; UDP-N-acetyl-alpha-D-glucosamine biosynthesis; UDP-N-acetyl-alpha-D-glucosamine from N-acetyl-alpha-D-glucosamine 1-phosphate: step 1/1. It functions in the pathway bacterial outer membrane biogenesis; LPS lipid A biosynthesis. Its function is as follows. Catalyzes the last two sequential reactions in the de novo biosynthetic pathway for UDP-N-acetylglucosamine (UDP-GlcNAc). The C-terminal domain catalyzes the transfer of acetyl group from acetyl coenzyme A to glucosamine-1-phosphate (GlcN-1-P) to produce N-acetylglucosamine-1-phosphate (GlcNAc-1-P), which is converted into UDP-GlcNAc by the transfer of uridine 5-monophosphate (from uridine 5-triphosphate), a reaction catalyzed by the N-terminal domain. This Geobacillus sp. (strain WCH70) protein is Bifunctional protein GlmU.